Consider the following 277-residue polypeptide: Large ribosomal subunit protein uL2 (277 aa).

The interval 227-277 (VMNPVDHPHGGGEGRTSGGRHPVTPWGVPTKGKKTRSKTKASDRLIMRRRK) is disordered. A compositionally biased stretch (basic and acidic residues) spans 266-277 (KASDRLIMRRRK).

This sequence belongs to the universal ribosomal protein uL2 family. As to quaternary structure, part of the 50S ribosomal subunit. Forms a bridge to the 30S subunit in the 70S ribosome.

Functionally, one of the primary rRNA binding proteins. Required for association of the 30S and 50S subunits to form the 70S ribosome, for tRNA binding and peptide bond formation. It has been suggested to have peptidyltransferase activity; this is somewhat controversial. Makes several contacts with the 16S rRNA in the 70S ribosome. The protein is Large ribosomal subunit protein uL2 of Magnetococcus marinus (strain ATCC BAA-1437 / JCM 17883 / MC-1).